A 96-amino-acid polypeptide reads, in one-letter code: Small ribosomal subunit protein bS6 (96 aa).

Belongs to the bacterial ribosomal protein bS6 family.

Functionally, binds together with bS18 to 16S ribosomal RNA. This chain is Small ribosomal subunit protein bS6, found in Streptococcus gordonii (strain Challis / ATCC 35105 / BCRC 15272 / CH1 / DL1 / V288).